A 194-amino-acid chain; its full sequence is Myelin-associated neurite-outgrowth inhibitor (194 aa).

N-acetylmethionine is present on Met-1. Topologically, residues Met-1–Lys-18 are cytoplasmic. Ser-6 bears the Phosphoserine mark. Residues Gly-19–Tyr-41 traverse the membrane as a helical segment. At Pro-42–Ser-141 the chain is on the extracellular side. N-linked (GlcNAc...) asparagine glycosylation is present at Asn-45. A helical membrane pass occupies residues Gly-142–Ala-163. The Cytoplasmic portion of the chain corresponds to His-164 to Trp-194.

This sequence belongs to the FAM168 family. May form homodimers. May interact with DAZAP2, FAM168A, PRDX6, RBM6, TMTC1 and YPEL2. Interacts with CDC27. Post-translationally, N-glycosylated. Predominantly expressed in the brain, including olfactory bulb, cortex and cerebellum (at protein level).

The protein resides in the cytoplasm. The protein localises to the perinuclear region. It localises to the cell membrane. It is found in the cell projection. Its subcellular location is the axon. Its function is as follows. Inhibitor of neuronal axonal outgrowth. Acts as a negative regulator of CDC42 and STAT3 and a positive regulator of STMN2. Positive regulator of CDC27. The protein is Myelin-associated neurite-outgrowth inhibitor (Fam168b) of Mus musculus (Mouse).